The following is a 74-amino-acid chain: Turripeptide OL135 (74 aa).

The N-terminal stretch at 1–20 (MKVPIVLMLVLLLIMPLSDG) is a signal peptide. Residues 21-28 (YERKRXXX) constitute a propeptide that is removed on maturation.

Belongs to the conopeptide P-like superfamily. Contains 3 disulfide bonds. In terms of tissue distribution, expressed by the venom duct.

The protein resides in the secreted. Functionally, acts as a neurotoxin by inhibiting an ion channel. This Iotyrris olangoensis (Sea snail) protein is Turripeptide OL135.